Consider the following 128-residue polypeptide: Iron-sulfur cluster insertion protein ErpA (128 aa).

Cys56, Cys120, and Cys122 together coordinate iron-sulfur cluster.

It belongs to the HesB/IscA family. In terms of assembly, homodimer. It depends on iron-sulfur cluster as a cofactor.

Functionally, required for insertion of 4Fe-4S clusters for at least IspG. In Xanthomonas oryzae pv. oryzae (strain MAFF 311018), this protein is Iron-sulfur cluster insertion protein ErpA.